Consider the following 625-residue polypeptide: tRNA uridine 5-carboxymethylaminomethyl modification enzyme MnmG (625 aa).

FAD is bound at residue Gly-13–Gly-18. Residue Gly-273–Phe-287 coordinates NAD(+).

Belongs to the MnmG family. Homodimer. Heterotetramer of two MnmE and two MnmG subunits. FAD is required as a cofactor.

It is found in the cytoplasm. Functionally, NAD-binding protein involved in the addition of a carboxymethylaminomethyl (cmnm) group at the wobble position (U34) of certain tRNAs, forming tRNA-cmnm(5)s(2)U34. The polypeptide is tRNA uridine 5-carboxymethylaminomethyl modification enzyme MnmG (Methylococcus capsulatus (strain ATCC 33009 / NCIMB 11132 / Bath)).